The sequence spans 315 residues: Phosphatidylglycerol--prolipoprotein diacylglyceryl transferase (315 aa).

The next 2 membrane-spanning stretches (helical) occupy residues phenylalanine 19–leucine 39 and valine 93–leucine 113. Arginine 141 serves as a coordination point for a 1,2-diacyl-sn-glycero-3-phospho-(1'-sn-glycerol). The next 2 helical transmembrane spans lie at leucine 188–isoleucine 208 and valine 256–tyrosine 276.

The protein belongs to the Lgt family.

The protein localises to the cell membrane. The catalysed reaction is L-cysteinyl-[prolipoprotein] + a 1,2-diacyl-sn-glycero-3-phospho-(1'-sn-glycerol) = an S-1,2-diacyl-sn-glyceryl-L-cysteinyl-[prolipoprotein] + sn-glycerol 1-phosphate + H(+). Its pathway is protein modification; lipoprotein biosynthesis (diacylglyceryl transfer). Functionally, catalyzes the transfer of the diacylglyceryl group from phosphatidylglycerol to the sulfhydryl group of the N-terminal cysteine of a prolipoprotein, the first step in the formation of mature lipoproteins. This chain is Phosphatidylglycerol--prolipoprotein diacylglyceryl transferase, found in Bifidobacterium longum (strain DJO10A).